Here is a 113-residue protein sequence, read N- to C-terminus: Nucleoid-associated protein Syncc9605_0027 (113 aa).

The protein belongs to the YbaB/EbfC family. In terms of assembly, homodimer.

It localises to the cytoplasm. It is found in the nucleoid. Functionally, binds to DNA and alters its conformation. May be involved in regulation of gene expression, nucleoid organization and DNA protection. This is Nucleoid-associated protein Syncc9605_0027 from Synechococcus sp. (strain CC9605).